The sequence spans 188 residues: Ribosome-recycling factor (188 aa).

The protein belongs to the RRF family.

It is found in the cytoplasm. Its function is as follows. Responsible for the release of ribosomes from messenger RNA at the termination of protein biosynthesis. May increase the efficiency of translation by recycling ribosomes from one round of translation to another. This Cereibacter sphaeroides (strain ATCC 17029 / ATH 2.4.9) (Rhodobacter sphaeroides) protein is Ribosome-recycling factor.